A 67-amino-acid polypeptide reads, in one-letter code: Large ribosomal subunit protein bL31 (67 aa).

Belongs to the bacterial ribosomal protein bL31 family. Type A subfamily. In terms of assembly, part of the 50S ribosomal subunit.

Binds the 23S rRNA. The protein is Large ribosomal subunit protein bL31 of Leptospira borgpetersenii serovar Hardjo-bovis (strain JB197).